The primary structure comprises 293 residues: Elongation factor Ts (293 aa).

An involved in Mg(2+) ion dislocation from EF-Tu region spans residues 81 to 84 (TDFV).

The protein belongs to the EF-Ts family.

It is found in the cytoplasm. Associates with the EF-Tu.GDP complex and induces the exchange of GDP to GTP. It remains bound to the aminoacyl-tRNA.EF-Tu.GTP complex up to the GTP hydrolysis stage on the ribosome. The polypeptide is Elongation factor Ts (Methylococcus capsulatus (strain ATCC 33009 / NCIMB 11132 / Bath)).